Here is a 74-residue protein sequence, read N- to C-terminus: Cytochrome c oxidase subunit 3 (74 aa).

2 consecutive transmembrane segments (helical) span residues 15–37 (SPWP…KWFH) and 42–59 (SLFL…YQWW).

This sequence belongs to the cytochrome c oxidase subunit 3 family. Component of the cytochrome c oxidase (complex IV, CIV), a multisubunit enzyme composed of a catalytic core of 3 subunits and several supernumerary subunits. The complex exists as a monomer or a dimer and forms supercomplexes (SCs) in the inner mitochondrial membrane with ubiquinol-cytochrome c oxidoreductase (cytochrome b-c1 complex, complex III, CIII).

The protein resides in the mitochondrion inner membrane. It carries out the reaction 4 Fe(II)-[cytochrome c] + O2 + 8 H(+)(in) = 4 Fe(III)-[cytochrome c] + 2 H2O + 4 H(+)(out). Functionally, component of the cytochrome c oxidase, the last enzyme in the mitochondrial electron transport chain which drives oxidative phosphorylation. The respiratory chain contains 3 multisubunit complexes succinate dehydrogenase (complex II, CII), ubiquinol-cytochrome c oxidoreductase (cytochrome b-c1 complex, complex III, CIII) and cytochrome c oxidase (complex IV, CIV), that cooperate to transfer electrons derived from NADH and succinate to molecular oxygen, creating an electrochemical gradient over the inner membrane that drives transmembrane transport and the ATP synthase. Cytochrome c oxidase is the component of the respiratory chain that catalyzes the reduction of oxygen to water. Electrons originating from reduced cytochrome c in the intermembrane space (IMS) are transferred via the dinuclear copper A center (CU(A)) of subunit 2 and heme A of subunit 1 to the active site in subunit 1, a binuclear center (BNC) formed by heme A3 and copper B (CU(B)). The BNC reduces molecular oxygen to 2 water molecules using 4 electrons from cytochrome c in the IMS and 4 protons from the mitochondrial matrix. This chain is Cytochrome c oxidase subunit 3 (mt:CoIII), found in Drosophila simulans (Fruit fly).